A 310-amino-acid chain; its full sequence is Ribosomal RNA small subunit methyltransferase H (310 aa).

S-adenosyl-L-methionine is bound by residues A32–H34, D51, F78, D99, and Q106.

The protein belongs to the methyltransferase superfamily. RsmH family.

The protein localises to the cytoplasm. It carries out the reaction cytidine(1402) in 16S rRNA + S-adenosyl-L-methionine = N(4)-methylcytidine(1402) in 16S rRNA + S-adenosyl-L-homocysteine + H(+). Specifically methylates the N4 position of cytidine in position 1402 (C1402) of 16S rRNA. The polypeptide is Ribosomal RNA small subunit methyltransferase H (Macrococcus caseolyticus (strain JCSC5402) (Macrococcoides caseolyticum)).